Here is a 310-residue protein sequence, read N- to C-terminus: Junctional adhesion molecule C (310 aa).

The N-terminal stretch at 1–31 (MALSRRLRLRLCARLPDFFLLLLFRGCVIEA) is a signal peptide. Topologically, residues 32-241 (VNLKSSNRNP…GQDMEVYDLN (210 aa)) are extracellular. The region spanning 35–127 (KSSNRNPVVH…VALNDRKEVD (93 aa)) is the Ig-like V-type domain. 2 cysteine pairs are disulfide-bonded: C53-C115 and C160-C219. N104 and N192 each carry an N-linked (GlcNAc...) asparagine glycan. One can recognise an Ig-like C2-type domain in the interval 139–236 (PVAPVCRVPK…AARCEGQDME (98 aa)). Residues 242–262 (IAGIIGGVLVVLIVLAVITMG) traverse the membrane as a helical segment. The Cytoplasmic portion of the chain corresponds to 263–310 (ICCAYRRGCFISSKQDGESYKSPGKHEGVNYIRTSEEGDFRHKSSFVI). S-palmitoyl cysteine attachment occurs at residues C264 and C265.

This sequence belongs to the immunoglobulin superfamily. Interacts with ITGAM. Interacts with GORASP2. In terms of processing, proteolytically cleaved from endothelial cells surface into a soluble form by ADAM10 and ADAM17; the release of soluble JAM3 is increased by pro-inflammatory factors. S-palmitoylated by ZDHHC7. S-palmitoylation promotes expression at tight junctions.

It is found in the cell membrane. The protein localises to the cell junction. The protein resides in the desmosome. It localises to the tight junction. Its subcellular location is the secreted. Its function is as follows. Junctional adhesion protein that mediates heterotypic cell-cell interactions with its cognate receptor JAM2 to regulate different cellular processes. Plays a role in homing and mobilization of hematopoietic stem and progenitor cells within the bone marrow. At the surface of bone marrow stromal cells, it contributes to the retention of the hematopoietic stem and progenitor cells expressing JAM3. Plays a central role in leukocytes extravasation by facilitating transmigration through the endothelium. Plays a role in spermatogenesis where JAM2 and JAM3, which are respectively expressed by Sertoli and germ cells, mediate an interaction between both cell types and play an essential role in the anchorage of germ cells onto Sertoli cells and the assembly of cell polarity complexes during spermatid differentiation. Also functions as a counter-receptor for ITGAM, mediating leukocyte-platelet interactions and is involved in the regulation of transepithelial migration of polymorphonuclear neutrophils (PMN). Plays a role in angiogenesis. Plays a role in the regulation of cell migration. During myogenesis, it is involved in myocyte fusion. In terms of biological role, promotes chemotaxis of vascular endothelial cells and stimulates angiogenesis. The protein is Junctional adhesion molecule C (Jam3) of Rattus norvegicus (Rat).